Consider the following 294-residue polypeptide: Nucleotide-binding protein CPF_0343 (294 aa).

Position 8–15 (glycine 8–threonine 15) interacts with ATP. Aspartate 59 to glycine 62 is a GTP binding site.

Belongs to the RapZ-like family.

In terms of biological role, displays ATPase and GTPase activities. This is Nucleotide-binding protein CPF_0343 from Clostridium perfringens (strain ATCC 13124 / DSM 756 / JCM 1290 / NCIMB 6125 / NCTC 8237 / Type A).